Here is a 701-residue protein sequence, read N- to C-terminus: Ubiquitin thioesterase zranb1-A (701 aa).

RanBP2-type zinc fingers lie at residues 3 to 33 (EHGIKWGCEYCTYENWPSAIKCTMCRAPRPS), 79 to 108 (PSSKWSCQICTYLNWPRAIRCTQCLSQRRT), and 143 to 173 (IKGQHWTCSACTYENCAKAKKCVVCDHPTPN). Zn(2+) is bound by residues C10, C13, C24, C27, C85, C88, C99, and C102. Over residues 108–121 (TRSPTESPQSSGSG) the composition is skewed to polar residues. Residues 108–129 (TRSPTESPQSSGSGLRSIPSPI) are disordered. Zn(2+) contacts are provided by C150, C153, C164, and C167. The segment at 198–219 (WRGGCSSSNSQRRSPPTSKRDS) is disordered. A compositionally biased stretch (polar residues) spans 202–214 (CSSSNSQRRSPPT). 2 ANK repeats span residues 253–283 (RKTDWLFLNACVGIVEGDLSAVESYKTSGGD) and 306–333 (YTLVHLSIRFQRQDMLAILLTEVSQHAA). The 161-residue stretch at 425–585 (LYALWNRTAG…RGHFSALVAM (161 aa)) folds into the OTU domain. C436 acts as the Nucleophile in catalysis. H578 serves as the catalytic Proton acceptor.

It belongs to the peptidase C64 family.

Its subcellular location is the cytoplasm. It localises to the nucleus. The catalysed reaction is Thiol-dependent hydrolysis of ester, thioester, amide, peptide and isopeptide bonds formed by the C-terminal Gly of ubiquitin (a 76-residue protein attached to proteins as an intracellular targeting signal).. Ubiquitin thioesterase, which specifically hydrolyzes 'Lys-29'-linked and 'Lys-33'-linked diubiquitin. Also cleaves 'Lys-63'-linked chains, but with 40-fold less efficiency compared to 'Lys-29'-linked ones. Positive regulator of the Wnt signaling pathway that deubiquitinates apc protein, a negative regulator of Wnt-mediated transcription. Acts as a regulator of autophagy by mediating deubiquitination of pik3c3/vps34, thereby promoting autophagosome maturation. Plays a role in the regulation of cell morphology and cytoskeletal organization. Required in the stress fiber dynamics and cell migration. This chain is Ubiquitin thioesterase zranb1-A (zranb1-a), found in Xenopus laevis (African clawed frog).